Reading from the N-terminus, the 361-residue chain is Phospho-N-acetylmuramoyl-pentapeptide-transferase (361 aa).

10 helical membrane-spanning segments follow: residues 25-45 (RAVM…PWVI), 73-93 (TMGG…WADL), 97-117 (YVWL…YDDW), 132-152 (FKMA…IATA), 167-187 (TVAY…VIVG), 200-220 (GLAA…AYVA), 240-260 (VVVF…FNAY), 264-284 (VFMG…VAVI), 289-309 (IVLF…MIQV), and 338-358 (QVVV…LSTL).

This sequence belongs to the glycosyltransferase 4 family. MraY subfamily. Mg(2+) serves as cofactor.

Its subcellular location is the cell inner membrane. The catalysed reaction is UDP-N-acetyl-alpha-D-muramoyl-L-alanyl-gamma-D-glutamyl-meso-2,6-diaminopimeloyl-D-alanyl-D-alanine + di-trans,octa-cis-undecaprenyl phosphate = di-trans,octa-cis-undecaprenyl diphospho-N-acetyl-alpha-D-muramoyl-L-alanyl-D-glutamyl-meso-2,6-diaminopimeloyl-D-alanyl-D-alanine + UMP. It functions in the pathway cell wall biogenesis; peptidoglycan biosynthesis. Catalyzes the initial step of the lipid cycle reactions in the biosynthesis of the cell wall peptidoglycan: transfers peptidoglycan precursor phospho-MurNAc-pentapeptide from UDP-MurNAc-pentapeptide onto the lipid carrier undecaprenyl phosphate, yielding undecaprenyl-pyrophosphoryl-MurNAc-pentapeptide, known as lipid I. In Chromobacterium violaceum (strain ATCC 12472 / DSM 30191 / JCM 1249 / CCUG 213 / NBRC 12614 / NCIMB 9131 / NCTC 9757 / MK), this protein is Phospho-N-acetylmuramoyl-pentapeptide-transferase.